The chain runs to 576 residues: (+)-alpha-terpineol synthase (576 aa).

(2E)-geranyl diphosphate-binding residues include Arg286, Asp323, Asp327, Arg466, and Asn469. Residues Asp323 and Asp327 each coordinate Mg(2+). Positions Asp323–Asp327 match the DDXXD motif motif. 3 residues coordinate Mg(2+): Asn469, Thr473, and Glu477.

It belongs to the terpene synthase family. Tpsb subfamily. The cofactor is Mg(2+). Mn(2+) is required as a cofactor.

It carries out the reaction (2E,6E)-farnesyl diphosphate = beta-bisabolene + diphosphate. The catalysed reaction is (2E)-geranyl diphosphate + H2O = (R)-alpha-terpineol + diphosphate. It catalyses the reaction (2E)-geranyl diphosphate = (4S)-limonene + diphosphate. Its pathway is secondary metabolite biosynthesis; terpenoid biosynthesis. Its function is as follows. Monoterpene synthase which catalyzes the conversion of (2E)-geranyl diphosphate (GPP) to (R)-alpha-terpineol and (4S)-limonene, as well as small quantities of linalool, myrcene, (-)-alpha-pinene, (+)-sabinene and geraniol. To a lower extent, catalyzes the conversion of (2E,6E)-farnesyl diphosphate (FPP) to beta-bisabolene. The chain is (+)-alpha-terpineol synthase from Santalum album (White sandalwood).